Reading from the N-terminus, the 140-residue chain is uncharacterized protein (140 aa).

This is an uncharacterized protein from Xylella fastidiosa (strain 9a5c).